Reading from the N-terminus, the 122-residue chain is Large ribosomal subunit protein uL14 (122 aa).

The protein belongs to the universal ribosomal protein uL14 family. As to quaternary structure, part of the 50S ribosomal subunit. Forms a cluster with proteins L3 and L19. In the 70S ribosome, L14 and L19 interact and together make contacts with the 16S rRNA in bridges B5 and B8.

In terms of biological role, binds to 23S rRNA. Forms part of two intersubunit bridges in the 70S ribosome. The chain is Large ribosomal subunit protein uL14 from Chlamydia abortus (strain DSM 27085 / S26/3) (Chlamydophila abortus).